Reading from the N-terminus, the 1038-residue chain is MDPNTIIEALRGTMDPALREAAERQLNEAHKSLNFVSTLLQITMSEQLDLPVRQAGVIYLKNMITQYWPDRETAPGDISPYTIPEEDRHCIRENIVEAIIHSPELIRVQLTTCIHHIIKHDYPSRWTAIVDKIGFYLQSDNSACWLGILLCLYQLVKNYEYKKPEERSPLVAAMQHFLPVLKDRFIQLLSDQSDQSVLIQKQIFKIFYALVQYTLPLELINQQNLTEWIEILKTVVNRDVPNETLQVEEDDRPELPWWKCKKWALHILARLFERYGSPGNVSKEYNEFAEVFLKAFAVGVQQVLLKVLYQYKEKQYMAPRVLQQTLNYINQGVSHALTWKNLKPHIQGIIQDVIFPLMCYTDADEELWQEDPYEYIRMKFDVFEDFISPTTAAQTLLFTACSKRKEVLQKTMGFCYQILTEPNADPRKKDGALHMIGSLAEILLKKKIYKDQMEYMLQNHVFPLFSSELGYMRARACWVLHYFCEVKFKSDQNLQTALELTRRCLIDDREMPVKVEAAIALQVLISNQEKAKEYITPFIRPVMQALLHIIRETENDDLTNVIQKMICEYSEEVTPIAVEMTQHLAMTFNQVIQTGPDEEGSDDKAVTAMGILNTIDTLLSVVEDHKEITQQLEGICLQVIGTVLQQHVLEFYEEIFSLAHSLTCQQVSPQMWQLLPLVFEVFQQDGFDYFTDMMPLLHNYVTVDTDTLLSDTKYLEMIYSMCKKVLTGVAGEDAECHAAKLLEVIILQCKGRGIDQCIPLFVEAALERLTREVKTSELRTMCLQVAIAALYYNPHLLLNTLENLRFPNNVEPVTNHFITQWLNDVDCFLGLHDRKMCVLGLCALIDMEQIPQVLNQVSGQILPAFILLFNGLKRAYACHAEHENDSDDDDEAEDDDETEELGSDEDDIDEDGQEYLEILAKQAGEDGDDEDWEEDDAEETALEGYSTIIDDEDNPVDEYQIFKAIFQTIQNRNPVWYQALTHGLNEEQRKQLQDIATLADQRRAAHESKMIEKHGGYKFSAPVVPSSFNFGGPAPGMN.

Position 1 is an N-acetylmethionine (methionine 1). The region spanning 22–101 is the Importin N-terminal domain; it reads AERQLNEAHK…RENIVEAIIH (80 aa). Residues 881 to 910 form a disordered region; the sequence is EHENDSDDDDEAEDDDETEELGSDEDDIDE. The span at 884–910 shows a compositional bias: acidic residues; it reads NDSDDDDEAEDDDETEELGSDEDDIDE. Serine 886 carries the post-translational modification Phosphoserine. Threonine 898 is subject to Phosphothreonine. 2 positions are modified to phosphoserine: serine 903 and serine 1020.

Belongs to the importin beta family. As to quaternary structure, forms a heterodimer with KPNB1. Interacts with histone H1. Interacts with H2A, H2B, H3 and H4 histones. Interacts with SNUPN and XPO1. Interacts with RPS7 and RPL5. Interacts with RPL23A (via BIB domain). Binds directly to nuclear pore complexes. Interacts with SMAD4 and NUP93; translocates SMAD4 to the nucleus through the NPC upon BMP7 stimulation resulting in activation of SMAD4 signaling. Interacts with phosphorylated SMAD2; the interaction facilitates translocation of SMAD2 to the nucleus. Interacts with SRP19. Interacts with RUNX2; the interaction inhibits RUNX2 nuclear translocation in osteoblasts. Interacts with HDAC6, DLX3 and KLF4; the interaction facilitates HDAC6, DLX3 and KLF4 nuclear translocation in dental papilla cells. In terms of assembly, (Microbial infection) Interacts with HIV-1 reverse transcription complex integrase and rev.

The protein localises to the cytoplasm. The protein resides in the nucleus. Functionally, functions in nuclear protein import, either by acting as autonomous nuclear transport receptor or as an adapter-like protein in association with the importin-beta subunit KPNB1. Acting autonomously, is thought to serve itself as receptor for nuclear localization signals (NLS) and to promote translocation of import substrates through the nuclear pore complex (NPC) by an energy requiring, Ran-dependent mechanism. At the nucleoplasmic side of the NPC, Ran binds to importin, the importin/substrate complex dissociates and importin is re-exported from the nucleus to the cytoplasm where GTP hydrolysis releases Ran. The directionality of nuclear import is thought to be conferred by an asymmetric distribution of the GTP- and GDP-bound forms of Ran between the cytoplasm and nucleus. Mediates autonomously the nuclear import of ribosomal proteins RPL23A, RPS7 and RPL5. In association with KPNB1 mediates the nuclear import of H1 histone and the Ran-binding site of IPO7 is not required but synergizes with that of KPNB1 in importin/substrate complex dissociation. Promotes odontoblast differentiation via promoting nuclear translocation of DLX3, KLF4, SMAD2, thereby facilitating the transcription of target genes that play a role in odontoblast differentiation. Facilitates BMP4-induced translocation of SMAD1 to the nucleus and recruitment to the MSX1 gene promoter, thereby promotes the expression of the odontogenic regulator MSX1 in dental mesenchymal cells. Also promotes odontoblast differentiation by facilitating the nuclear translocation of HDAC6 and subsequent repression of RUNX2 expression. Inhibits osteoblast differentiation by inhibiting nuclear translocation of RUNX2 and therefore inhibition of RUNX2 target gene transcription. In vitro, mediates nuclear import of H2A, H2B, H3 and H4 histones. Its function is as follows. (Microbial infection) Mediates the nuclear import of HIV-1 reverse transcription complex (RTC) integrase. Binds and mediates the nuclear import of HIV-1 Rev. The chain is Importin-7 (IPO7) from Homo sapiens (Human).